The sequence spans 64 residues: Protein translocase subunit SecE (64 aa).

Residues 35-55 (LVVLGTVAFITVFFAVVDYGI) traverse the membrane as a helical segment.

Belongs to the SecE/SEC61-gamma family. Component of the Sec protein translocase complex. Heterotrimer consisting of SecY, SecE and SecG subunits. The heterotrimers can form oligomers, although 1 heterotrimer is thought to be able to translocate proteins. Interacts with the ribosome. Interacts with SecDF, and other proteins may be involved. Interacts with SecA.

It is found in the cell membrane. Essential subunit of the Sec protein translocation channel SecYEG. Clamps together the 2 halves of SecY. May contact the channel plug during translocation. The protein is Protein translocase subunit SecE of Halalkalibacterium halodurans (strain ATCC BAA-125 / DSM 18197 / FERM 7344 / JCM 9153 / C-125) (Bacillus halodurans).